Reading from the N-terminus, the 238-residue chain is tRNA (guanine-N(1)-)-methyltransferase (238 aa).

132 to 137 (IGDYVL) lines the S-adenosyl-L-methionine pocket.

This sequence belongs to the RNA methyltransferase TrmD family. As to quaternary structure, homodimer.

It is found in the cytoplasm. It carries out the reaction guanosine(37) in tRNA + S-adenosyl-L-methionine = N(1)-methylguanosine(37) in tRNA + S-adenosyl-L-homocysteine + H(+). In terms of biological role, specifically methylates guanosine-37 in various tRNAs. The sequence is that of tRNA (guanine-N(1)-)-methyltransferase from Nitrobacter hamburgensis (strain DSM 10229 / NCIMB 13809 / X14).